The following is a 504-amino-acid chain: Syntaphilin (504 aa).

A disordered region spans residues 1 to 74 (MAMSLQGSRR…HGIKPPTPEQ (74 aa)). Composition is skewed to low complexity over residues 7-26 (GSRRASAGSRRRTSPPVSVR) and 33-49 (SLSSSSNSGSCKGSDSS). Positions 79–161 (LQQKEVCIRH…VKNNLIDKDK (83 aa)) form a coiled coil. The tract at residues 191–244 (VAKEEGTGESAGGSPARSLTRSSTYTKLSDPAVCGDRQAGDPSNTPAEDRADSG) is disordered. 2 positions are modified to phosphoserine: Ser-200 and Ser-204. The segment covering 207–217 (RSLTRSSTYTK) has biased composition (polar residues). The residue at position 214 (Thr-214) is a Phosphothreonine. Ser-219 bears the Phosphoserine mark. Thr-235 carries the post-translational modification Phosphothreonine. A helical transmembrane segment spans residues 437–456 (YIVDLLAVVVPAVPTVAWLC).

As to quaternary structure, binds to STX1A. Interacts with DNM1; this interaction inhibits the binding of DNM1 to AMPH and DNM1-receptor-mediated endocytosis.

It is found in the membrane. It localises to the synapse. The protein resides in the synaptosome. Its function is as follows. Inhibits SNARE complex formation by absorbing free STX1A. This Rattus norvegicus (Rat) protein is Syntaphilin.